The chain runs to 66 residues: UPF0370 protein YpfN (66 aa).

A helical transmembrane segment spans residues 4–24 (LAKYWWILVLVFLVGVLLNVI). Residues 39 to 66 (KPELPPHRDFNDKWDDEDGWPKKDQPKK) are disordered. Residues 42-66 (LPPHRDFNDKWDDEDGWPKKDQPKK) show a composition bias toward basic and acidic residues.

It belongs to the UPF0370 family.

The protein localises to the cell membrane. This chain is UPF0370 protein YpfN, found in Salmonella paratyphi B (strain ATCC BAA-1250 / SPB7).